A 962-amino-acid polypeptide reads, in one-letter code: Translation initiation factor IF-2 (962 aa).

Residues 52-77 are compositionally biased toward basic and acidic residues; it reads RSHGQADDSSRKKITLTKRETSEIRQ. Disordered regions lie at residues 52–87 and 121–378; these read RSHG…TRTV and AVEE…EPVV. Residues 78 to 87 show a composition bias toward polar residues; it reads SDGTGKTRTV. 3 stretches are compositionally biased toward basic and acidic residues: residues 123–183, 197–250, and 267–278; these read EEAR…KAEE, DSSR…EAEA, and PSERKAEEKKAE. Residues 342-355 show a composition bias toward gly residues; that stretch reads TSGGVGGWRGGPRG. Residues 462 to 631 enclose the tr-type G domain; the sequence is PRPPVVTVMG…LLQAEVLELT (170 aa). Residues 471–478 are G1; it reads GHVDHGKT. A GTP-binding site is contributed by 471-478; that stretch reads GHVDHGKT. The G2 stretch occupies residues 496–500; it reads GITQH. The G3 stretch occupies residues 517 to 520; that stretch reads DTPG. GTP-binding positions include 517–521 and 571–574; these read DTPGH and NKID. Residues 571–574 are G4; the sequence is NKID. The tract at residues 607–609 is G5; the sequence is SAK.

It belongs to the TRAFAC class translation factor GTPase superfamily. Classic translation factor GTPase family. IF-2 subfamily.

It localises to the cytoplasm. Functionally, one of the essential components for the initiation of protein synthesis. Protects formylmethionyl-tRNA from spontaneous hydrolysis and promotes its binding to the 30S ribosomal subunits. Also involved in the hydrolysis of GTP during the formation of the 70S ribosomal complex. In Cupriavidus necator (strain ATCC 17699 / DSM 428 / KCTC 22496 / NCIMB 10442 / H16 / Stanier 337) (Ralstonia eutropha), this protein is Translation initiation factor IF-2.